A 95-amino-acid polypeptide reads, in one-letter code: 6 kDa early secretory antigenic target homolog (95 aa).

This sequence belongs to the WXG100 family. ESAT-6 subfamily. In terms of assembly, forms a tight 1:1 complex with EsxB.

The protein resides in the secreted. In terms of biological role, a secreted protein that might play a role in virulence. The polypeptide is 6 kDa early secretory antigenic target homolog (esxA) (Mycobacterium leprae (strain TN)).